The sequence spans 213 residues: Proteasome subunit beta 1 (213 aa).

Positions 1 to 18 (MVFIAVFNGVFAMSSLPG) are cleaved as a propeptide — removed in mature form; by autocatalysis. Thr19 acts as the Nucleophile in catalysis.

It belongs to the peptidase T1B family. In terms of assembly, the 20S proteasome core is composed of 14 alpha and 14 beta subunits that assemble into four stacked heptameric rings, resulting in a barrel-shaped structure. The two inner rings, each composed of seven catalytic beta subunits, are sandwiched by two outer rings, each composed of seven alpha subunits. The catalytic chamber with the active sites is on the inside of the barrel. Has a gated structure, the ends of the cylinder being occluded by the N-termini of the alpha-subunits. Is capped at one or both ends by the proteasome regulatory ATPase, PAN.

Its subcellular location is the cytoplasm. It carries out the reaction Cleavage of peptide bonds with very broad specificity.. Its activity is regulated as follows. The formation of the proteasomal ATPase PAN-20S proteasome complex, via the docking of the C-termini of PAN into the intersubunit pockets in the alpha-rings, triggers opening of the gate for substrate entry. Interconversion between the open-gate and close-gate conformations leads to a dynamic regulation of the 20S proteasome proteolysis activity. Component of the proteasome core, a large protease complex with broad specificity involved in protein degradation. This is Proteasome subunit beta 1 from Staphylothermus marinus (strain ATCC 43588 / DSM 3639 / JCM 9404 / F1).